A 341-amino-acid polypeptide reads, in one-letter code: HTH-type sugar sensing transcriptional regulator TrmBL1 (341 aa).

A DNA-binding region (H-T-H motif) is located at residues 32 to 53; it reads SKATDVTKESGIPHTRIYDVLS.

It belongs to the transcriptional regulator TrmB family. Homotetramer. Forms homooctamers in the presence of maltotriose or maltose.

With respect to regulation, repressor activity is regulated by binding of different sugars to TrmBL1. Binding of maltose and maltotriose results in derepression of the target genes. However, high sugar concentration results in formation of octamers with high affinity for DNA, which may prevent transcription of target genes. Functionally, global transcriptional repressor of the maltodextrin transport gene cluster (mdxE operon) and most likely of all genes encoding glycolytic enzymes. Acts by binding to the conserved TGM (Thermococcales-Glycolytic-Motif) sequences in their promoter region. Can also interact with non-TGM sequences. This Pyrococcus furiosus (strain ATCC 43587 / DSM 3638 / JCM 8422 / Vc1) protein is HTH-type sugar sensing transcriptional regulator TrmBL1 (trmBL1).